The chain runs to 4690 residues: Nonribosomal peptide synthetase sidN (4690 aa).

Residues 238–656 (ARVRENPGRI…LGRLSSDQIK (419 aa)) form an adenylation 1 region. The Carrier 1 domain maps to 779-856 (SSSIPMLQSV…DLDTKAQQAL (78 aa)). S816 is modified (O-(pantetheine 4'-phosphoryl)serine). The interval 925–1175 (PGGKAFIQHT…AFGNTMSGRF (251 aa)) is condensation 1. Positions 1349-1760 (EFAQKSPNAI…GRKDDLVKIR (412 aa)) are adenylation 2. Positions 1889 to 1965 (PAWCIKHRPL…DLINHLSVKR (77 aa)) constitute a Carrier 2 domain. An O-(pantetheine 4'-phosphoryl)serine modification is found at S1926. The segment at 2001-2285 (PTTVFQDGML…SERLLESQLV (285 aa)) is condensation 2. The segment at 2464-2869 (TWAKTHPEWK…GRKDEQVKVR (406 aa)) is adenylation 3. In terms of domain architecture, Carrier 3 spans 3002 to 3079 (RDLTSIEKQI…ELGRMKNALK (78 aa)). The residue at position 3040 (S3040) is an O-(pantetheine 4'-phosphoryl)serine. Positions 3121–3530 (CMPLQEVLVA…QMESLVTSFT (410 aa)) are condensation 3. The Carrier 4 domain maps to 3564–3637 (SVLEQQIRDV…KLATHIQTTS (74 aa)). O-(pantetheine 4'-phosphoryl)serine is present on S3598. Residues 3679–4087 (VYPLTPLQAG…FESIRKHPDE (409 aa)) are condensation 4. The region spanning 4119–4195 (SAIDQFLDPL…KLCEVAFAKS (77 aa)) is the Carrier 5 domain. At S4156 the chain carries O-(pantetheine 4'-phosphoryl)serine. The interval 4262 to 4589 (WVFKAENGLD…FNAHLNILWN (328 aa)) is condensation 5.

It belongs to the NRP synthetase family.

The protein operates within siderophore biosynthesis. Its function is as follows. Nonribosomal peptide synthetase required for the biosynthetis of epichloenin A, an extracellular siderophore that plays a crucial role in endophyte-grass symbioses. SidN assembles epichloenin A by activating and incorporating three trans-anhydromevalonylhydroxyornithine (trans-AMHO), 1 glutamine and 4 glycine moieties. Trans-AMHO is produced from L-ornithine via 2 steps involving a L-ornithine N(5)-monooxygenase and an AHMO-N(5)-transacylase that have still to be identified. The third adenylation domain (A3) of sidN incorporates the hydroxamate groups of the siderophore which forms an octahedral iron complex. The other component amino acids are assembled by sidN adenylation domains A1 and A2. In Epichloe festucae (strain E2368), this protein is Nonribosomal peptide synthetase sidN.